Here is a 361-residue protein sequence, read N- to C-terminus: MATTVHLSSFSLFIQSRGRRDNSISSVKSLKKRTGLSPSSALTSQGGRDMIPPQGKSNDHNSAFDFKLYMIRKAESVNAALDVSIVPLREPLTVQEAVRYSLLAGGKRVRPLLCIAVCELVGGDEATAMSAACAVEMIHTSSLIHDDLPCMDNADLRRGKPTNHKVFGEDMAVLAGDALLALAFEHMTVVSSGLVASERMIRAVVELARAIGTKGLVAGQVVDLSSERLNPHDVGLERLEFIHLHKTAALLEAAAVIGAIMGGGTEEEIEKLRKYARCIGLLFQVVDDILDVTKSTEELGKTAGKDVMAGKLTYPRLIGLERSREVAEKLSREAEEQLLGFESDKAAPLVALASYISCRND.

The transit peptide at 1-39 (MATTVHLSSFSLFIQSRGRRDNSISSVKSLKKRTGLSPS) directs the protein to the chloroplast. A disordered region spans residues 24 to 58 (ISSVKSLKKRTGLSPSSALTSQGGRDMIPPQGKSN). Residues 36–46 (LSPSSALTSQG) show a composition bias toward polar residues. 3 residues coordinate isopentenyl diphosphate: Lys-107, Arg-110, and His-139. Mg(2+) contacts are provided by Asp-146 and Asp-152. Residue Arg-157 participates in dimethylallyl diphosphate binding. Isopentenyl diphosphate is bound at residue Arg-158. The dimethylallyl diphosphate site is built by Lys-246, Thr-247, Gln-284, Lys-301, and Lys-311.

It belongs to the FPP/GGPP synthase family. As to quaternary structure, monomer. Requires Mg(2+) as cofactor.

Its subcellular location is the plastid. The protein resides in the chloroplast. It catalyses the reaction isopentenyl diphosphate + dimethylallyl diphosphate = (2E)-geranyl diphosphate + diphosphate. It carries out the reaction isopentenyl diphosphate + (2E)-geranyl diphosphate = (2E,6E)-farnesyl diphosphate + diphosphate. The enzyme catalyses isopentenyl diphosphate + (2E,6E)-farnesyl diphosphate = (2E,6E,10E)-geranylgeranyl diphosphate + diphosphate. The protein operates within isoprenoid biosynthesis; farnesyl diphosphate biosynthesis; farnesyl diphosphate from geranyl diphosphate and isopentenyl diphosphate: step 1/1. It functions in the pathway isoprenoid biosynthesis; geranyl diphosphate biosynthesis; geranyl diphosphate from dimethylallyl diphosphate and isopentenyl diphosphate: step 1/1. Its pathway is isoprenoid biosynthesis; geranylgeranyl diphosphate biosynthesis; geranylgeranyl diphosphate from farnesyl diphosphate and isopentenyl diphosphate: step 1/1. Functionally, catalyzes the trans-addition of the three molecules of IPP onto DMAPP to form geranylgeranyl pyrophosphate. This is Putative geranylgeranyl pyrophosphate synthase 8, chloroplastic from Arabidopsis thaliana (Mouse-ear cress).